A 100-amino-acid chain; its full sequence is MANAIDTRHYDVIVAPHITEKATLLSENNAVVFKVADKATKPEIKAAVEALFNVKVTKVNTLTQKGKTKRWKGKPYKRTDVKKAVVTLAAGQSIDVTSGI.

It belongs to the universal ribosomal protein uL23 family. In terms of assembly, part of the 50S ribosomal subunit. Contacts protein L29, and trigger factor when it is bound to the ribosome.

One of the early assembly proteins it binds 23S rRNA. One of the proteins that surrounds the polypeptide exit tunnel on the outside of the ribosome. Forms the main docking site for trigger factor binding to the ribosome. This chain is Large ribosomal subunit protein uL23, found in Novosphingobium aromaticivorans (strain ATCC 700278 / DSM 12444 / CCUG 56034 / CIP 105152 / NBRC 16084 / F199).